Here is a 110-residue protein sequence, read N- to C-terminus: T cell receptor alpha variable 39 (110 aa).

The first 18 residues, 1-18 (MKKLLAMILWLQLDRLSG), serve as a signal peptide directing secretion. Residues 19-110 (ELKVEQNPLF…LSATYFCAVD (92 aa)) enclose the Ig-like domain. N-linked (GlcNAc...) asparagine glycosylation is found at Asn36 and Asn42. Residues Cys41 and Cys107 are joined by a disulfide bond.

In terms of assembly, alpha-beta TR is a heterodimer composed of an alpha and beta chain; disulfide-linked. The alpha-beta TR is associated with the transmembrane signaling CD3 coreceptor proteins to form the TR-CD3 (TcR or TCR). The assembly of alpha-beta TR heterodimers with CD3 occurs in the endoplasmic reticulum where a single alpha-beta TR heterodimer associates with one CD3D-CD3E heterodimer, one CD3G-CD3E heterodimer and one CD247 homodimer forming a stable octameric structure. CD3D-CD3E and CD3G-CD3E heterodimers preferentially associate with TR alpha and TR beta chains, respectively. The association of the CD247 homodimer is the last step of TcR assembly in the endoplasmic reticulum and is required for transport to the cell surface.

The protein resides in the cell membrane. V region of the variable domain of T cell receptor (TR) alpha chain that participates in the antigen recognition. Alpha-beta T cell receptors are antigen specific receptors which are essential to the immune response and are present on the cell surface of T lymphocytes. Recognize peptide-major histocompatibility (MH) (pMH) complexes that are displayed by antigen presenting cells (APC), a prerequisite for efficient T cell adaptive immunity against pathogens. Binding of alpha-beta TR to pMH complex initiates TR-CD3 clustering on the cell surface and intracellular activation of LCK that phosphorylates the ITAM motifs of CD3G, CD3D, CD3E and CD247 enabling the recruitment of ZAP70. In turn ZAP70 phosphorylates LAT, which recruits numerous signaling molecules to form the LAT signalosome. The LAT signalosome propagates signal branching to three major signaling pathways, the calcium, the mitogen-activated protein kinase (MAPK) kinase and the nuclear factor NF-kappa-B (NF-kB) pathways, leading to the mobilization of transcription factors that are critical for gene expression and essential for T cell growth and differentiation. The T cell repertoire is generated in the thymus, by V-(D)-J rearrangement. This repertoire is then shaped by intrathymic selection events to generate a peripheral T cell pool of self-MH restricted, non-autoaggressive T cells. Post-thymic interaction of alpha-beta TR with the pMH complexes shapes TR structural and functional avidity. The sequence is that of T cell receptor alpha variable 39 from Homo sapiens (Human).